Consider the following 319-residue polypeptide: Red chlorophyll catabolite reductase, chloroplastic (319 aa).

A chloroplast-targeting transit peptide spans 1 to 39; the sequence is MAMIFCNTLYSSSSPSYLSPLTSKPSRFSKNLRPRAQFQ. Red chlorophyll catabolite is bound by residues Glu-154 and 207–209; that span reads YVS. A coiled-coil region spans residues 255-286; the sequence is LERCVKEEEEKIVVGEEERMELERRDKSFRRK. Asp-291 is a binding site for red chlorophyll catabolite.

As to quaternary structure, homodimer. Interacts with HCAR. Interacts with SGR1, NYC1, NOL, PPH, PAO and the LHCII complex. Part of a SGR1-CCE-LHCII complex, which acts in chlorophyll breakdown. Expressed in all tissues tested, including roots.

The protein localises to the plastid. The protein resides in the chloroplast stroma. Its subcellular location is the chloroplast thylakoid membrane. It carries out the reaction primary fluorescent chlorophyll catabolite + 2 oxidized [2Fe-2S]-[ferredoxin] = red chlorophyll catabolite + 2 reduced [2Fe-2S]-[ferredoxin] + 3 H(+). Its pathway is porphyrin-containing compound metabolism; chlorophyll degradation. Functionally, catalyzes the key reaction of chlorophyll catabolism, porphyrin macrocycle cleavage of pheophorbide a (pheide a) to a primary fluorescent catabolite (pFCC). Works in a two-step reaction with pheophorbide a oxygenase (PaO) by reducing the C20/C1 double bond of the intermediate, RCC. Belongs to the chlorophyll catabolic enzymes (CCEs). The sequence is that of Red chlorophyll catabolite reductase, chloroplastic from Arabidopsis thaliana (Mouse-ear cress).